The chain runs to 383 residues: L-Ala-D/L-Glu epimerase (383 aa).

Residues R68, Y94, and 198-200 (KVK) each bind substrate. The Mg(2+) site is built by D224, E251, and D276. Residues K298, 326 to 328 (CMT), and 348 to 350 (DLD) each bind substrate.

It belongs to the mandelate racemase/muconate lactonizing enzyme family. It depends on Mg(2+) as a cofactor.

It carries out the reaction L-alanyl-L-glutamate = L-alanyl-D-glutamate. In terms of biological role, catalyzes the epimerization of L-Ala-D-Glu to L-Ala-L-Glu and may play a role in the metabolism of the murein peptide, of which L-Ala-D-Glu is a component. Is also able to catalyze the epimerization of L-Ala-D-Asp, L-Ala-L-Glu, L-Ala-L-Ser, L-Ala-L-Pro, L-Ala-L-L-Val, L-Ala-L-Thr, L-Ala-L-Leu, L-Ala-L-Ile and L-Gly-L-Glu (in vitro). This is L-Ala-D/L-Glu epimerase from Bacteroides thetaiotaomicron (strain ATCC 29148 / DSM 2079 / JCM 5827 / CCUG 10774 / NCTC 10582 / VPI-5482 / E50).